The chain runs to 127 residues: Glycine cleavage system H protein (127 aa).

Residues glutamate 22–glutamate 104 form the Lipoyl-binding domain. Lysine 63 carries the post-translational modification N6-lipoyllysine.

Belongs to the GcvH family. As to quaternary structure, the glycine cleavage system is composed of four proteins: P, T, L and H. (R)-lipoate is required as a cofactor.

Its function is as follows. The glycine cleavage system catalyzes the degradation of glycine. The H protein shuttles the methylamine group of glycine from the P protein to the T protein. In terms of biological role, is also involved in protein lipoylation via its role as an octanoyl/lipoyl carrier protein intermediate. This Bacillus cereus (strain ZK / E33L) protein is Glycine cleavage system H protein.